The primary structure comprises 102 residues: ATP-dependent Clp protease adapter protein ClpS (102 aa).

This sequence belongs to the ClpS family. As to quaternary structure, binds to the N-terminal domain of the chaperone ClpA.

Functionally, involved in the modulation of the specificity of the ClpAP-mediated ATP-dependent protein degradation. The sequence is that of ATP-dependent Clp protease adapter protein ClpS from Shewanella baltica (strain OS155 / ATCC BAA-1091).